Consider the following 295-residue polypeptide: Probable alpha-L-glutamate ligase 1 (295 aa).

Residues 104 to 287 (MQLLSRKGIG…VANAIIEFIE (184 aa)) enclose the ATP-grasp domain. Residues Lys141, 178-179 (EY), Asp187, and 211-213 (RSN) contribute to the ATP site. Mg(2+) contacts are provided by Asp248, Glu260, and Asn262. Residues Asp248, Glu260, and Asn262 each coordinate Mn(2+).

This sequence belongs to the RimK family. Mg(2+) serves as cofactor. The cofactor is Mn(2+).

The chain is Probable alpha-L-glutamate ligase 1 from Shewanella denitrificans (strain OS217 / ATCC BAA-1090 / DSM 15013).